Reading from the N-terminus, the 513-residue chain is ATP synthase subunit alpha (513 aa).

169 to 176 (GDRQTGKT) provides a ligand contact to ATP.

It belongs to the ATPase alpha/beta chains family. As to quaternary structure, F-type ATPases have 2 components, CF(1) - the catalytic core - and CF(0) - the membrane proton channel. CF(1) has five subunits: alpha(3), beta(3), gamma(1), delta(1), epsilon(1). CF(0) has three main subunits: a(1), b(2) and c(9-12). The alpha and beta chains form an alternating ring which encloses part of the gamma chain. CF(1) is attached to CF(0) by a central stalk formed by the gamma and epsilon chains, while a peripheral stalk is formed by the delta and b chains.

The protein resides in the cell inner membrane. The catalysed reaction is ATP + H2O + 4 H(+)(in) = ADP + phosphate + 5 H(+)(out). Functionally, produces ATP from ADP in the presence of a proton gradient across the membrane. The alpha chain is a regulatory subunit. The protein is ATP synthase subunit alpha of Pasteurella multocida (strain Pm70).